The primary structure comprises 299 residues: tRNA dimethylallyltransferase (299 aa).

Residue glycine 13–threonine 20 participates in ATP binding. Residue threonine 15–threonine 20 coordinates substrate. The interval aspartate 38–glutamine 41 is interaction with substrate tRNA.

It belongs to the IPP transferase family. In terms of assembly, monomer. Mg(2+) is required as a cofactor.

It carries out the reaction adenosine(37) in tRNA + dimethylallyl diphosphate = N(6)-dimethylallyladenosine(37) in tRNA + diphosphate. Functionally, catalyzes the transfer of a dimethylallyl group onto the adenine at position 37 in tRNAs that read codons beginning with uridine, leading to the formation of N6-(dimethylallyl)adenosine (i(6)A). The protein is tRNA dimethylallyltransferase of Prochlorococcus marinus (strain NATL2A).